We begin with the raw amino-acid sequence, 252 residues long: uncharacterized protein (252 aa).

The first 25 residues, 1 to 25, serve as a signal peptide directing secretion; sequence MRKKKFLSRFAFGSLFLLCGTILSA. Cys-26 carries N-palmitoyl cysteine lipidation. Cys-26 carries S-diacylglycerol cysteine lipidation.

It belongs to the MG439/MG440 family.

The protein localises to the cell membrane. This is an uncharacterized protein from Mycoplasma pneumoniae (strain ATCC 29342 / M129 / Subtype 1) (Mycoplasmoides pneumoniae).